Here is a 669-residue protein sequence, read N- to C-terminus: GTP-binding protein 1 (669 aa).

A disordered region spans residues 1–32 (MAAERSRSPMESPVPASMFAPEPSSPGAARAA). Phosphoserine is present on residues serine 6, serine 8, serine 12, serine 24, serine 25, serine 44, serine 47, and serine 69. One can recognise a tr-type G domain in the interval 158-389 (FLEVRVAVVG…LNLLSPRTSY (232 aa)). The tract at residues 167–174 (GNVDAGKS) is G1. 167–174 (GNVDAGKS) lines the GTP pocket. The interval 206–210 (GRTSS) is G2. The interval 252–255 (DLAG) is G3. GTP is bound by residues 252-256 (DLAGH) and 308-311 (TKID). The tract at residues 308 to 311 (TKID) is G4. Residues 366 to 368 (SNV) form a G5 region. The span at 573-595 (LLQTTNNSPMNSKPQQIKMQSTK) shows a compositional bias: polar residues. Residues 573–669 (LLQTTNNSPM…GACMTPASGC (97 aa)) are disordered. The residue at position 580 (serine 580) is a Phosphoserine. Residues 633-645 (SSSLQPQPKPSSG) are compositionally biased toward low complexity. Basic residues predominate over residues 646–657 (GRRRGGQRHKVK).

It belongs to the TRAFAC class translation factor GTPase superfamily. Classic translation factor GTPase family. GTPBP1 subfamily. Interacts with EXOSC2/RRP4, EXOSC3/RRP40, EXOSC5/RRP46, HNRNPD, HNRNPR and SYNCRIP. Identified in a complex with AANAT mRNA, but does not bind mRNA by itself.

It localises to the cytoplasm. Its function is as follows. Promotes degradation of target mRNA species. Plays a role in the regulation of circadian mRNA stability. Binds GTP and has GTPase activity. This chain is GTP-binding protein 1 (GTPBP1), found in Bos taurus (Bovine).